The sequence spans 152 residues: Lipoprotein signal peptidase (152 aa).

The next 2 helical transmembrane spans lie at 55-75 and 85-105; these read NKMW…VFYM and LGIS…DRVF. Active-site residues include aspartate 111 and aspartate 129. Residues 124 to 144 traverse the membrane as a helical segment; the sequence is VFNIADSALCIGVVLIIIQTL.

This sequence belongs to the peptidase A8 family.

The protein resides in the cell membrane. It catalyses the reaction Release of signal peptides from bacterial membrane prolipoproteins. Hydrolyzes -Xaa-Yaa-Zaa-|-(S,diacylglyceryl)Cys-, in which Xaa is hydrophobic (preferably Leu), and Yaa (Ala or Ser) and Zaa (Gly or Ala) have small, neutral side chains.. It participates in protein modification; lipoprotein biosynthesis (signal peptide cleavage). Functionally, this protein specifically catalyzes the removal of signal peptides from prolipoproteins. This Bacillus cytotoxicus (strain DSM 22905 / CIP 110041 / 391-98 / NVH 391-98) protein is Lipoprotein signal peptidase.